We begin with the raw amino-acid sequence, 302 residues long: Protein FLOURY 1 (302 aa).

2 helical membrane passes run 27–47 (SAGA…VAVL) and 82–102 (LAGS…FLAV). The interval 160–195 (SSKPVSRSLAAEFDQEADGEEEDNAGETSDPDDGSV) is disordered. Positions 172-192 (FDQEADGEEEDNAGETSDPDD) are enriched in acidic residues. One can recognise a GTD-binding domain in the interval 193 to 299 (GSVQYLRRRL…ALSETSEDDR (107 aa)). The stretch at 199-254 (RRRLKEEMLLKEVALEELEKERHAAASAADEAMSKIACLRSEKALVEREARQFQEM) forms a coiled coil. The interval 283-302 (PEAITDRALSETSEDDRDKK) is disordered.

In terms of assembly, interacts (via C-terminus) with both 22 kDa and 19 kDa alpha-zeins. Interacts (via C-terminus) with OP10 (via N-terminus). In terms of tissue distribution, expressed in endosperm. Not detected in embryo, leaves and roots.

It localises to the endoplasmic reticulum membrane. Its function is as follows. Involved in protein body development and 22 kDa alpha-zein localization. In Zea mays (Maize), this protein is Protein FLOURY 1.